A 327-amino-acid chain; its full sequence is tRNA dimethylallyltransferase (327 aa).

Position 14–21 (14–21) interacts with ATP; the sequence is GPTASGKT. Substrate is bound at residue 16–21; the sequence is TASGKT. Interaction with substrate tRNA regions lie at residues 39 to 42 and 163 to 167; these read DSAL and QRIQR.

Belongs to the IPP transferase family. In terms of assembly, monomer. The cofactor is Mg(2+).

It carries out the reaction adenosine(37) in tRNA + dimethylallyl diphosphate = N(6)-dimethylallyladenosine(37) in tRNA + diphosphate. In terms of biological role, catalyzes the transfer of a dimethylallyl group onto the adenine at position 37 in tRNAs that read codons beginning with uridine, leading to the formation of N6-(dimethylallyl)adenosine (i(6)A). In Xanthomonas oryzae pv. oryzae (strain PXO99A), this protein is tRNA dimethylallyltransferase.